An 875-amino-acid polypeptide reads, in one-letter code: Probable ATP-dependent RNA helicase DDX10 (875 aa).

Positions 1 to 43 (MGKTANSPGSGARPDPVRSFNRWKKKHSHRQNKKKQLRKQLKK) are disordered. At T4 the chain carries Phosphothreonine. At S7 the chain carries Phosphoserine. The segment covering 21–41 (NRWKKKHSHRQNKKKQLRKQL) has biased composition (basic residues). The Q motif signature appears at 69–97 (TRFSDFPLSKKTLKGLQEAQYRLVTEIQK). ATP-binding positions include 89 to 91 (YRL), Q96, and 113 to 120 (AKTGSGKT). A Helicase ATP-binding domain is found at 100-274 (IGLALQGKDV…RLSLKNPEYV (175 aa)). The DEAD box motif lies at 222–225 (DEAD). In terms of domain architecture, Helicase C-terminal spans 287–448 (TLEQNYIVCE…EIKINPEKLI (162 aa)). Residue S539 is modified to Phosphoserine. At K555 the chain carries N6-acetyllysine. The segment at 562–631 (GGKRLEGTEH…QFLDRDEEEE (70 aa)) is disordered. Positions 564–575 (KRLEGTEHRQDN) are enriched in basic and acidic residues. A Phosphothreonine modification is found at T577. The segment covering 577–593 (TGNEEQEEEEDDEEEME) has biased composition (acidic residues). Polar residues predominate over residues 603–613 (QAPSLPNTSEA). K649 is covalently cross-linked (Glycyl lysine isopeptide (Lys-Gly) (interchain with G-Cter in SUMO2)). The disordered stretch occupies residues 703 to 850 (MQKSAIKDAE…HNRKKARWDT (148 aa)). Residues 727–741 (ERLQEEDKFDKEEYR) are compositionally biased toward basic and acidic residues. Positions 742–751 (KKIKAKHREK) are enriched in basic residues. Residues 752 to 771 (RLKEREARREANKRQAKAKD) show a composition bias toward basic and acidic residues. Residues 772–790 (EEEAFLDWSDDDDDDDDGF) show a composition bias toward acidic residues. S780 is subject to Phosphoserine. Positions 812–821 (MENKISDTKK) are enriched in basic and acidic residues. A Phosphoserine modification is found at S831.

Belongs to the DEAD box helicase family. DDX10/DBP4 subfamily. Interacts with AIM2; this interaction promotes AIM2 stability. Interacts with SCNA; this interaction causes DDX10 mislocalization to the nucleoplasm and cytoplasmic inclusions. High in testis but widely expressed.

Its subcellular location is the cytoplasm. The protein resides in the nucleus. It localises to the nucleolus. It catalyses the reaction ATP + H2O = ADP + phosphate + H(+). In terms of biological role, putative ATP-dependent RNA helicase that plays various role in innate immunity or inflammation. Plays a role in the enhancement of AIM2-induced inflammasome activation by interacting with AIM2 and stabilizing its protein level. Negatively regulates viral infection by promoting interferon beta production and interferon stimulated genes/ISGs expression. In Homo sapiens (Human), this protein is Probable ATP-dependent RNA helicase DDX10 (DDX10).